We begin with the raw amino-acid sequence, 1098 residues long: Paired amphipathic helix protein Sin3b (1098 aa).

Gly residues predominate over residues Met1 to Gly25. Positions Met1 to Gly26 are disordered. The tract at residues Met1–Phe299 is interaction with CRY1. PAH domains are found at residues Leu30 to Gly100 and Val145 to Ala230. The segment at Pro52–Pro98 is interaction with REST. Residues Asn238–Gln247 show a composition bias toward polar residues. The interval Asn238–Lys274 is disordered. Residues Lys275–Gln499 form an interaction with NCOR1 region. Residues Lys283–Lys360 form the PAH 3 domain. Residues Ala383–Ile550 are interaction with SUDS3 and HDAC1. Positions Gln661–Pro702 are disordered. Phosphoserine is present on residues Ser667 and Ser670. The span at Glu673–Pro694 shows a compositional bias: basic and acidic residues.

Component of the SIN3B complex, which includes SIN3B, HDAC2 or HDAC1, PHF12 and MORF4L1. Interacts with FOXK1/MNF, MXI, MAD, NCOR1 and SAP30. Interaction with SUDS3 enhances the interaction with HDAC1 to form a complex. Interacts with CRY1, HCFC1, MAD3, MAD4, MAEL, REST, RNF220 and SETDB1. Interacts with C6orf89. Interacts with MYT1L. In terms of processing, ubiquitinated by RNF220 that leads to proteasomal degradation.

It is found in the nucleus. Functionally, acts as a transcriptional repressor. Interacts with MXI1 to repress MYC responsive genes and antagonize MYC oncogenic activities. Interacts with MAD-MAX heterodimers by binding to MAD. The heterodimer then represses transcription by tethering SIN3B to DNA. Also forms a complex with FOXK1 which represses transcription. With FOXK1, regulates cell cycle progression probably by repressing cell cycle inhibitor genes expression. As part of the SIN3B complex represses transcription and counteracts the histone acetyltransferase activity of EP300 through the recognition H3K27ac marks by PHF12 and the activity of the histone deacetylase HDAC2. SIN3B complex is recruited downstream of the constitutively active genes transcriptional start sites through interaction with histones and mitigates histone acetylation and RNA polymerase II progression within transcribed regions contributing to the regulation of transcription. This Mus musculus (Mouse) protein is Paired amphipathic helix protein Sin3b (Sin3b).